A 264-amino-acid polypeptide reads, in one-letter code: Thymidylate synthase (264 aa).

Arg21 is a binding site for dUMP. His51 provides a ligand contact to (6R)-5,10-methylene-5,6,7,8-tetrahydrofolate. Arg126–Arg127 is a dUMP binding site. Cys146 functions as the Nucleophile in the catalytic mechanism. DUMP contacts are provided by residues Arg166–Asp169, Asn177, and His207–Tyr209. Residue Asp169 coordinates (6R)-5,10-methylene-5,6,7,8-tetrahydrofolate. Ala263 contacts (6R)-5,10-methylene-5,6,7,8-tetrahydrofolate.

The protein belongs to the thymidylate synthase family. Bacterial-type ThyA subfamily. In terms of assembly, homodimer.

The protein localises to the cytoplasm. It catalyses the reaction dUMP + (6R)-5,10-methylene-5,6,7,8-tetrahydrofolate = 7,8-dihydrofolate + dTMP. The protein operates within pyrimidine metabolism; dTTP biosynthesis. In terms of biological role, catalyzes the reductive methylation of 2'-deoxyuridine-5'-monophosphate (dUMP) to 2'-deoxythymidine-5'-monophosphate (dTMP) while utilizing 5,10-methylenetetrahydrofolate (mTHF) as the methyl donor and reductant in the reaction, yielding dihydrofolate (DHF) as a by-product. This enzymatic reaction provides an intracellular de novo source of dTMP, an essential precursor for DNA biosynthesis. The sequence is that of Thymidylate synthase from Parabacteroides distasonis (strain ATCC 8503 / DSM 20701 / CIP 104284 / JCM 5825 / NCTC 11152).